A 491-amino-acid chain; its full sequence is 2,3-bisphosphoglycerate-independent phosphoglycerate mutase (491 aa).

Positions 11 and 61 each coordinate Mn(2+). The active-site Phosphoserine intermediate is S61. Residues H118, 147–148 (RD), R177, R183, 247–250 (RNDR), and K320 each bind substrate. Positions 386, 390, 427, 428, and 445 each coordinate Mn(2+).

The protein belongs to the BPG-independent phosphoglycerate mutase family. As to quaternary structure, monomer. Requires Mn(2+) as cofactor.

The enzyme catalyses (2R)-2-phosphoglycerate = (2R)-3-phosphoglycerate. It functions in the pathway carbohydrate degradation; glycolysis; pyruvate from D-glyceraldehyde 3-phosphate: step 3/5. Catalyzes the interconversion of 2-phosphoglycerate and 3-phosphoglycerate. The polypeptide is 2,3-bisphosphoglycerate-independent phosphoglycerate mutase (Helicobacter pylori (strain J99 / ATCC 700824) (Campylobacter pylori J99)).